An 819-amino-acid chain; its full sequence is Probable beta-glucosidase G (819 aa).

A signal peptide spans 1 to 20 (MTSASQILVWGLLAASGAQA). N-linked (GlcNAc...) asparagine glycosylation is found at asparagine 41, asparagine 59, asparagine 107, asparagine 228, and asparagine 277. Aspartate 305 is an active-site residue. Asparagine 337, asparagine 344, asparagine 351, asparagine 403, asparagine 500, asparagine 509, asparagine 554, asparagine 567, asparagine 588, asparagine 627, asparagine 683, and asparagine 719 each carry an N-linked (GlcNAc...) asparagine glycan.

This sequence belongs to the glycosyl hydrolase 3 family.

It is found in the secreted. It catalyses the reaction Hydrolysis of terminal, non-reducing beta-D-glucosyl residues with release of beta-D-glucose.. The protein operates within glycan metabolism; cellulose degradation. Functionally, beta-glucosidases are one of a number of cellulolytic enzymes involved in the degradation of cellulosic biomass. Catalyzes the last step releasing glucose from the inhibitory cellobiose. The sequence is that of Probable beta-glucosidase G (bglG) from Emericella nidulans (strain FGSC A4 / ATCC 38163 / CBS 112.46 / NRRL 194 / M139) (Aspergillus nidulans).